The primary structure comprises 380 residues: Erythronate-4-phosphate dehydrogenase (380 aa).

Residues serine 45 and threonine 66 each contribute to the substrate site. NAD(+) is bound by residues aspartate 146, threonine 174, 205 to 207 (ASR), and aspartate 231. Arginine 207 is a catalytic residue. Residue glutamate 236 is part of the active site. Residue histidine 253 is the Proton donor of the active site. An NAD(+)-binding site is contributed by glycine 256. Tyrosine 257 provides a ligand contact to substrate.

This sequence belongs to the D-isomer specific 2-hydroxyacid dehydrogenase family. PdxB subfamily. Homodimer.

Its subcellular location is the cytoplasm. It catalyses the reaction 4-phospho-D-erythronate + NAD(+) = (R)-3-hydroxy-2-oxo-4-phosphooxybutanoate + NADH + H(+). Its pathway is cofactor biosynthesis; pyridoxine 5'-phosphate biosynthesis; pyridoxine 5'-phosphate from D-erythrose 4-phosphate: step 2/5. Catalyzes the oxidation of erythronate-4-phosphate to 3-hydroxy-2-oxo-4-phosphonooxybutanoate. This is Erythronate-4-phosphate dehydrogenase from Pseudomonas putida (strain GB-1).